Consider the following 431-residue polypeptide: MFHRHLCKLCSKTPSAATLASPLGKLQEERGEGVAKDPKKDKQHRQIFLQKFRERLDSDTTGKNTLAGFIDLPEGISPTMAAVGPLKRGEEPLPPWLKMKVAKGVSRLPRFNRIRNSMREKRLATVCEEAKCPNIGECWGGDEEEGTATATIMVMGSHCTRGCRFCSVLTSRTPPPLDPDEPQKVANAVAEMGVDYIVMTMVDRDDLTDGGAAHVVRCVNTIKEKNPLLLLEALVGDFHGDLKLVETVALSPLSVYAHNIECVERITPNVRDRRASYRQSLKVLEHVNSFTKGAMLTKSSIMLGLGEKEEEVRQTLRDLRTAGVSAVTLGQYLQPARTRLKVSRYAHPKEFQMWEEEAMAMGFLYCASGPLVRSSYRAGEYYIKSLVKQRGAAATKSNTTTTTTTTTTTTTTNTASLAAATVTDSATLQGE.

The segment at 21–43 (SPLGKLQEERGEGVAKDPKKDKQ) is disordered. Over residues 26–40 (LQEERGEGVAKDPKK) the composition is skewed to basic and acidic residues. Positions 127, 132, 138, 159, 163, 166, and 375 each coordinate [4Fe-4S] cluster. Positions 142–364 (DEEEGTATAT…EEEAMAMGFL (223 aa)) constitute a Radical SAM core domain.

This sequence belongs to the radical SAM superfamily. Lipoyl synthase family. The cofactor is [4Fe-4S] cluster.

The protein localises to the mitochondrion. The enzyme catalyses [[Fe-S] cluster scaffold protein carrying a second [4Fe-4S](2+) cluster] + N(6)-octanoyl-L-lysyl-[protein] + 2 oxidized [2Fe-2S]-[ferredoxin] + 2 S-adenosyl-L-methionine + 4 H(+) = [[Fe-S] cluster scaffold protein] + N(6)-[(R)-dihydrolipoyl]-L-lysyl-[protein] + 4 Fe(3+) + 2 hydrogen sulfide + 2 5'-deoxyadenosine + 2 L-methionine + 2 reduced [2Fe-2S]-[ferredoxin]. It participates in protein modification; protein lipoylation via endogenous pathway; protein N(6)-(lipoyl)lysine from octanoyl-[acyl-carrier-protein]: step 2/2. Functionally, catalyzes the radical-mediated insertion of two sulfur atoms into the C-6 and C-8 positions of the octanoyl moiety bound to the lipoyl domains of lipoate-dependent enzymes, thereby converting the octanoylated domains into lipoylated derivatives. The sequence is that of Lipoyl synthase 2, mitochondrial from Trypanosoma cruzi (strain CL Brener).